Reading from the N-terminus, the 212-residue chain is Protein-L-isoaspartate O-methyltransferase (212 aa).

Ser60 is an active-site residue.

This sequence belongs to the methyltransferase superfamily. L-isoaspartyl/D-aspartyl protein methyltransferase family.

The protein localises to the cytoplasm. The catalysed reaction is [protein]-L-isoaspartate + S-adenosyl-L-methionine = [protein]-L-isoaspartate alpha-methyl ester + S-adenosyl-L-homocysteine. Its function is as follows. Catalyzes the methyl esterification of L-isoaspartyl residues in peptides and proteins that result from spontaneous decomposition of normal L-aspartyl and L-asparaginyl residues. It plays a role in the repair and/or degradation of damaged proteins. This Methanococcus maripaludis (strain C5 / ATCC BAA-1333) protein is Protein-L-isoaspartate O-methyltransferase.